We begin with the raw amino-acid sequence, 335 residues long: tRNA N6-adenosine threonylcarbamoyltransferase (335 aa).

Residues His109, His113, and Tyr130 each coordinate a divalent metal cation. Residues Tyr130 to Gly134, Asp162, Gly177, Glu181, and Asn266 contribute to the substrate site. Asp294 contributes to the a divalent metal cation binding site.

This sequence belongs to the KAE1 / TsaD family. As to quaternary structure, component of the EKC/KEOPS complex composed of at least GON7, TP53RK, TPRKB, OSGEP and LAGE3; the whole complex dimerizes. A divalent metal cation is required as a cofactor.

The protein resides in the cytoplasm. The protein localises to the nucleus. It catalyses the reaction L-threonylcarbamoyladenylate + adenosine(37) in tRNA = N(6)-L-threonylcarbamoyladenosine(37) in tRNA + AMP + H(+). Its function is as follows. Component of the EKC/KEOPS complex that is required for the formation of a threonylcarbamoyl group on adenosine at position 37 (t(6)A37) in tRNAs that read codons beginning with adenine. The complex is probably involved in the transfer of the threonylcarbamoyl moiety of threonylcarbamoyl-AMP (TC-AMP) to the N6 group of A37. OSGEP likely plays a direct catalytic role in this reaction, but requires other protein(s) of the complex to fulfill this activity. The sequence is that of tRNA N6-adenosine threonylcarbamoyltransferase (Osgep) from Rattus norvegicus (Rat).